Here is a 591-residue protein sequence, read N- to C-terminus: Vomeromodulin (591 aa).

Positions 1 to 18 (MWVLQALAIMLSIQAGTL) are cleaved as a signal peptide. A disordered region spans residues 151–172 (NEGNGDSSKPSSGSKATGGLGQ). Residues Asn421 and Asn516 are each glycosylated (N-linked (GlcNAc...) asparagine).

In terms of processing, N-glycosylated. The N-glycans consist mainly of complex sialylated and fucosylated biantennary structures. As to expression, expressed in lung. Not detected in other tissues tested (at protein level).

The protein localises to the secreted. The sequence is that of Vomeromodulin from Mus musculus (Mouse).